The chain runs to 712 residues: Probable serine/threonine-protein kinase fhkE (712 aa).

The FHA domain maps to 46–100 (ITFGRLKDSTVHYNDKSISGSHCKITRESNDDDGVVIAFIYDNSTNGTFIDNIKV). In terms of domain architecture, Protein kinase spans 145–411 (YFIGEMLGQG…CNNIIQHPWF (267 aa)). Residues 151-159 (LGQGNFATV) and Lys-174 contribute to the ATP site. Asp-270 acts as the Proton acceptor in catalysis. The stretch at 414-442 (NVKLSTLLEEDERLRKKAEAEVEANNNNT) forms a coiled coil. The tract at residues 431–695 (AEAEVEANNN…KCQYDPNCYR (265 aa)) is disordered. 5 stretches are compositionally biased toward low complexity: residues 436–446 (EANNNNTNKSN), 459–481 (GNCSDSNNNNNSGSKSLSSIKSN), 514–571 (NNDN…SNDT), 595–605 (NLQNHLNNNKI), and 616–639 (NNNNNNNNNNNNNNNNNNNNNNNN). Polar residues predominate over residues 669–678 (PQNSSNNNSG).

It belongs to the protein kinase superfamily. CAMK Ser/Thr protein kinase family. CHK2 subfamily.

It catalyses the reaction L-seryl-[protein] + ATP = O-phospho-L-seryl-[protein] + ADP + H(+). The catalysed reaction is L-threonyl-[protein] + ATP = O-phospho-L-threonyl-[protein] + ADP + H(+). This Dictyostelium discoideum (Social amoeba) protein is Probable serine/threonine-protein kinase fhkE (fhkE).